Here is a 580-residue protein sequence, read N- to C-terminus: DNA ligase B (580 aa).

The active-site N6-AMP-lysine intermediate is Lys-135.

The protein belongs to the NAD-dependent DNA ligase family. LigB subfamily.

The enzyme catalyses NAD(+) + (deoxyribonucleotide)n-3'-hydroxyl + 5'-phospho-(deoxyribonucleotide)m = (deoxyribonucleotide)n+m + AMP + beta-nicotinamide D-nucleotide.. Functionally, catalyzes the formation of phosphodiester linkages between 5'-phosphoryl and 3'-hydroxyl groups in double-stranded DNA using NAD as a coenzyme and as the energy source for the reaction. This is DNA ligase B from Photorhabdus laumondii subsp. laumondii (strain DSM 15139 / CIP 105565 / TT01) (Photorhabdus luminescens subsp. laumondii).